Here is a 255-residue protein sequence, read N- to C-terminus: Hydroxyacylglutathione hydrolase (255 aa).

Zn(2+) contacts are provided by histidine 53, histidine 55, aspartate 57, histidine 58, histidine 111, aspartate 128, and histidine 166.

Belongs to the metallo-beta-lactamase superfamily. Glyoxalase II family. Monomer. It depends on Zn(2+) as a cofactor.

It carries out the reaction an S-(2-hydroxyacyl)glutathione + H2O = a 2-hydroxy carboxylate + glutathione + H(+). It functions in the pathway secondary metabolite metabolism; methylglyoxal degradation; (R)-lactate from methylglyoxal: step 2/2. In terms of biological role, thiolesterase that catalyzes the hydrolysis of S-D-lactoyl-glutathione to form glutathione and D-lactic acid. The sequence is that of Hydroxyacylglutathione hydrolase from Nitrosomonas eutropha (strain DSM 101675 / C91 / Nm57).